A 160-amino-acid polypeptide reads, in one-letter code: 6,7-dimethyl-8-ribityllumazine synthase (160 aa).

5-amino-6-(D-ribitylamino)uracil contacts are provided by residues Trp28, 59 to 61 (ALE), and 81 to 83 (CVI). A (2S)-2-hydroxy-3-oxobutyl phosphate-binding site is contributed by 86–87 (ET). Catalysis depends on His89, which acts as the Proton donor. Asn114 serves as a coordination point for 5-amino-6-(D-ribitylamino)uracil. Residue Arg128 participates in (2S)-2-hydroxy-3-oxobutyl phosphate binding.

It belongs to the DMRL synthase family.

The catalysed reaction is (2S)-2-hydroxy-3-oxobutyl phosphate + 5-amino-6-(D-ribitylamino)uracil = 6,7-dimethyl-8-(1-D-ribityl)lumazine + phosphate + 2 H2O + H(+). Its pathway is cofactor biosynthesis; riboflavin biosynthesis; riboflavin from 2-hydroxy-3-oxobutyl phosphate and 5-amino-6-(D-ribitylamino)uracil: step 1/2. In terms of biological role, catalyzes the formation of 6,7-dimethyl-8-ribityllumazine by condensation of 5-amino-6-(D-ribitylamino)uracil with 3,4-dihydroxy-2-butanone 4-phosphate. This is the penultimate step in the biosynthesis of riboflavin. The chain is 6,7-dimethyl-8-ribityllumazine synthase from Corynebacterium jeikeium (strain K411).